Here is a 401-residue protein sequence, read N- to C-terminus: MSRRLFTSESVTEGHPDKLADQISDALLDAFLAGDPTSRVAVETLLTTGHVHVAGEVTSSAHVDVTAVVRRTLTDIGYDAATGFDGATVGVLVSIGAQSPDIAQGVDKAYEARVEGGEDTLAQQGAGDQGIMFGYATDETPDLLPLPITLAHRLAQRLSKVRHDGLLPYLRPDGKTQVTIEYDGDRPVRLDTVVVSAHHAADVDLATRLVPDIRDQVIAPELKRLAEENLGLEVDGYRLLVNPTGRFEIGGPIGDAGLTGRKIIIDTYGGYARHGGGAFSGKDPSKVDRSAAYALRWVAKNVVAAGLARRAELQVAYAIGKAEPVGLFVETFGTETVPVPEIARAVSEVFDLRPAAIIRDLDLLRPIYGQTASYGHFGRTLPDFTWERTDRADALRAAVGR.

Residue His15 coordinates ATP. Asp17 contributes to the Mg(2+) binding site. Glu43 lines the K(+) pocket. The L-methionine site is built by Glu56 and Gln98. Residues 98 to 108 (QSPDIAQGVDK) are flexible loop. ATP is bound by residues 173 to 175 (DGK), 246 to 247 (RF), Asp255, 261 to 262 (RK), Ala278, and Lys282. Asp255 contacts L-methionine. Lys286 provides a ligand contact to L-methionine.

This sequence belongs to the AdoMet synthase family. Homotetramer; dimer of dimers. Mg(2+) serves as cofactor. The cofactor is K(+).

The protein localises to the cytoplasm. It carries out the reaction L-methionine + ATP + H2O = S-adenosyl-L-methionine + phosphate + diphosphate. It functions in the pathway amino-acid biosynthesis; S-adenosyl-L-methionine biosynthesis; S-adenosyl-L-methionine from L-methionine: step 1/1. Functionally, catalyzes the formation of S-adenosylmethionine (AdoMet) from methionine and ATP. The overall synthetic reaction is composed of two sequential steps, AdoMet formation and the subsequent tripolyphosphate hydrolysis which occurs prior to release of AdoMet from the enzyme. This chain is S-adenosylmethionine synthase 1, found in Frankia casuarinae (strain DSM 45818 / CECT 9043 / HFP020203 / CcI3).